The sequence spans 514 residues: Protein nucleotidyltransferase YdiU (514 aa).

ATP is bound by residues Gly-111, Gly-113, Arg-114, Lys-134, Asp-146, Gly-147, Arg-197, and Arg-204. Asp-276 acts as the Proton acceptor in catalysis. Positions 277 and 286 each coordinate Mg(2+). Asp-286 contacts ATP.

It belongs to the SELO family. Mg(2+) serves as cofactor. The cofactor is Mn(2+).

It catalyses the reaction L-seryl-[protein] + ATP = 3-O-(5'-adenylyl)-L-seryl-[protein] + diphosphate. It carries out the reaction L-threonyl-[protein] + ATP = 3-O-(5'-adenylyl)-L-threonyl-[protein] + diphosphate. The enzyme catalyses L-tyrosyl-[protein] + ATP = O-(5'-adenylyl)-L-tyrosyl-[protein] + diphosphate. The catalysed reaction is L-histidyl-[protein] + UTP = N(tele)-(5'-uridylyl)-L-histidyl-[protein] + diphosphate. It catalyses the reaction L-seryl-[protein] + UTP = O-(5'-uridylyl)-L-seryl-[protein] + diphosphate. It carries out the reaction L-tyrosyl-[protein] + UTP = O-(5'-uridylyl)-L-tyrosyl-[protein] + diphosphate. Functionally, nucleotidyltransferase involved in the post-translational modification of proteins. It can catalyze the addition of adenosine monophosphate (AMP) or uridine monophosphate (UMP) to a protein, resulting in modifications known as AMPylation and UMPylation. The sequence is that of Protein nucleotidyltransferase YdiU from Rhodococcus jostii (strain RHA1).